A 450-amino-acid polypeptide reads, in one-letter code: Ribulose bisphosphate carboxylase large chain (450 aa).

Lysine 4 is modified (N6,N6,N6-trimethyllysine). Substrate contacts are provided by asparagine 113 and threonine 163. Lysine 165 serves as the catalytic Proton acceptor. A substrate-binding site is contributed by lysine 167. Residues lysine 191, aspartate 193, and glutamate 194 each coordinate Mg(2+). At lysine 191 the chain carries N6-carboxylysine. Histidine 284 functions as the Proton acceptor in the catalytic mechanism. The substrate site is built by arginine 285, histidine 317, and serine 369.

This sequence belongs to the RuBisCO large chain family. Type I subfamily. As to quaternary structure, heterohexadecamer of 8 large chains and 8 small chains; disulfide-linked. The disulfide link is formed within the large subunit homodimers. Mg(2+) serves as cofactor. The disulfide bond which can form in the large chain dimeric partners within the hexadecamer appears to be associated with oxidative stress and protein turnover.

Its subcellular location is the plastid. It localises to the chloroplast. It carries out the reaction 2 (2R)-3-phosphoglycerate + 2 H(+) = D-ribulose 1,5-bisphosphate + CO2 + H2O. It catalyses the reaction D-ribulose 1,5-bisphosphate + O2 = 2-phosphoglycolate + (2R)-3-phosphoglycerate + 2 H(+). Functionally, ruBisCO catalyzes two reactions: the carboxylation of D-ribulose 1,5-bisphosphate, the primary event in carbon dioxide fixation, as well as the oxidative fragmentation of the pentose substrate in the photorespiration process. Both reactions occur simultaneously and in competition at the same active site. In Sedum rubrotinctum (Jelly bean plant), this protein is Ribulose bisphosphate carboxylase large chain.